A 504-amino-acid polypeptide reads, in one-letter code: Histidine--tRNA ligase (504 aa).

The protein belongs to the class-II aminoacyl-tRNA synthetase family. Homodimer.

It localises to the cytoplasm. The enzyme catalyses tRNA(His) + L-histidine + ATP = L-histidyl-tRNA(His) + AMP + diphosphate + H(+). This is Histidine--tRNA ligase (hisS) from Rhizobium meliloti (strain 1021) (Ensifer meliloti).